The chain runs to 158 residues: uncharacterized protein (158 aa).

The N-terminal stretch at 1–19 (MQKLLLAVLFFSLLAIATA) is a signal peptide. The segment at 82-158 (ANPKAEAEPG…VYENDDENEE (77 aa)) is disordered. The span at 84 to 107 (PKAEAEPGSLDKEAGTKGEKEKNG) shows a compositional bias: basic and acidic residues. The span at 141–158 (DDDDDHDDVYENDDENEE) shows a compositional bias: acidic residues.

As to expression, prismatic layer of shell (at protein level). Expressed primarily in the mantle with highest level in the mantle edge and lower level in the mantle pallium.

It is found in the secreted. This is an uncharacterized protein from Pinctada maxima (Silver-lipped pearl oyster).